We begin with the raw amino-acid sequence, 78 residues long: Myrmicitoxin-Ta2a (78 aa).

An N-terminal signal peptide occupies residues 1–26 (MKLSFLSLALAIIFVTVLIYAPQAEA). Positions 27-56 (KALADAVADADADADAAADAVADALADADA) are excised as a propeptide. K77 carries the lysine amide modification.

It belongs to the formicidae venom precursor-01 superfamily. Expressed by the venom gland.

The protein resides in the secreted. In terms of biological role, peptide with toxicity towards insects that may also act as antimicrobial peptide. Causes calcium influx in F11 cells (EC(50)=5.8 nM), possibly by modulating sodium channels (Nav). In vivo, is lethal to insects, but does not show toxicity to vertebrates. Intraplantar injection into mice does not induce spontaneous nocifensive behaviors up to a dose of 200 pmol. The sequence is that of Myrmicitoxin-Ta2a from Tetramorium africanum (Fierce ant).